A 156-amino-acid polypeptide reads, in one-letter code: Transcription elongation factor GreA (156 aa).

Residues Glu-2–Arg-27 are a coiled coil.

It belongs to the GreA/GreB family.

In terms of biological role, necessary for efficient RNA polymerase transcription elongation past template-encoded arresting sites. The arresting sites in DNA have the property of trapping a certain fraction of elongating RNA polymerases that pass through, resulting in locked ternary complexes. Cleavage of the nascent transcript by cleavage factors such as GreA or GreB allows the resumption of elongation from the new 3'terminus. GreA releases sequences of 2 to 3 nucleotides. The polypeptide is Transcription elongation factor GreA (Lactococcus lactis subsp. cremoris (strain MG1363)).